We begin with the raw amino-acid sequence, 289 residues long: Nucleotide-binding protein Francci3_1634 (289 aa).

13-20 (GLSGAGRS) provides a ligand contact to ATP. 64-67 (DVRG) contacts GTP.

Belongs to the RapZ-like family.

In terms of biological role, displays ATPase and GTPase activities. The chain is Nucleotide-binding protein Francci3_1634 from Frankia casuarinae (strain DSM 45818 / CECT 9043 / HFP020203 / CcI3).